A 451-amino-acid chain; its full sequence is Glutamyl-tRNA(Gln) amidotransferase subunit D (451 aa).

The segment at 78-97 (PREAPTPGEEEGSQEDFGQP) is disordered. One can recognise an Asparaginase/glutaminase domain in the interval 99 to 432 (PRVFFVGTGG…EEIQRLFTAN (334 aa)). Catalysis depends on residues T109, T187, D188, and K266.

This sequence belongs to the asparaginase 1 family. GatD subfamily. As to quaternary structure, heterodimer of GatD and GatE.

The catalysed reaction is L-glutamyl-tRNA(Gln) + L-glutamine + ATP + H2O = L-glutaminyl-tRNA(Gln) + L-glutamate + ADP + phosphate + H(+). Allows the formation of correctly charged Gln-tRNA(Gln) through the transamidation of misacylated Glu-tRNA(Gln) in organisms which lack glutaminyl-tRNA synthetase. The reaction takes place in the presence of glutamine and ATP through an activated gamma-phospho-Glu-tRNA(Gln). The GatDE system is specific for glutamate and does not act on aspartate. The chain is Glutamyl-tRNA(Gln) amidotransferase subunit D from Thermofilum pendens (strain DSM 2475 / Hrk 5).